Consider the following 398-residue polypeptide: S-adenosylmethionine synthase (398 aa).

136–141 (GTGSSD) serves as a coordination point for ATP.

This sequence belongs to the AdoMet synthase 2 family. It depends on Mg(2+) as a cofactor.

It catalyses the reaction L-methionine + ATP + H2O = S-adenosyl-L-methionine + phosphate + diphosphate. It participates in amino-acid biosynthesis; S-adenosyl-L-methionine biosynthesis; S-adenosyl-L-methionine from L-methionine: step 1/1. Catalyzes the formation of S-adenosylmethionine from methionine and ATP. The chain is S-adenosylmethionine synthase from Methanosarcina mazei (strain ATCC BAA-159 / DSM 3647 / Goe1 / Go1 / JCM 11833 / OCM 88) (Methanosarcina frisia).